Reading from the N-terminus, the 78-residue chain is Signal peptidase complex subunit 1 (78 aa).

At 1-18 (MNYLEGTIDFAGQLRCQK) the chain is on the cytoplasmic side. A helical membrane pass occupies residues 19–38 (YMNYGLCTSAVISYIYGYLV). At 39 to 42 (QDSY) the chain is on the lumenal side. A helical transmembrane segment spans residues 43-63 (CVIKLFLILASLVALVCLPAW). Over 64–78 (SMYNKNPLKFQKKKE) the chain is Cytoplasmic.

It belongs to the SPCS1 family. As to quaternary structure, component of the signal peptidase complex (SPC) composed of a catalytic subunit sec11 and three accessory subunits spc1, spc2 and spc3. The complex induces a local thinning of the ER membrane which is used to measure the length of the signal peptide (SP) h-region of protein substrates. This ensures the selectivity of the complex towards h-regions shorter than 18-20 amino acids. SPC associates with the translocon complex.

The protein localises to the endoplasmic reticulum membrane. Its function is as follows. Component of the signal peptidase complex (SPC) which catalyzes the cleavage of N-terminal signal sequences from nascent proteins as they are translocated into the lumen of the endoplasmic reticulum. Dispensable for SPC enzymatic activity. The sequence is that of Signal peptidase complex subunit 1 from Schizosaccharomyces pombe (strain 972 / ATCC 24843) (Fission yeast).